The following is a 106-amino-acid chain: uncharacterized protein (106 aa).

2 consecutive transmembrane segments (helical) span residues Ala17 to Val37 and Phe55 to Phe75.

The protein resides in the membrane. This is an uncharacterized protein from Saccharomyces cerevisiae (strain ATCC 204508 / S288c) (Baker's yeast).